Consider the following 129-residue polypeptide: Small ribosomal subunit protein eS6 (129 aa).

Belongs to the eukaryotic ribosomal protein eS6 family.

The chain is Small ribosomal subunit protein eS6 from Methanocorpusculum labreanum (strain ATCC 43576 / DSM 4855 / Z).